Reading from the N-terminus, the 601-residue chain is Elongation factor 4 (601 aa).

The tr-type G domain maps to 7–189 (KNIRNFSIVA…AIVTRLPPPQ (183 aa)). Residues 19 to 24 (DHGKST) and 136 to 139 (NKID) each bind GTP.

Belongs to the TRAFAC class translation factor GTPase superfamily. Classic translation factor GTPase family. LepA subfamily.

The protein resides in the cell inner membrane. The catalysed reaction is GTP + H2O = GDP + phosphate + H(+). In terms of biological role, required for accurate and efficient protein synthesis under certain stress conditions. May act as a fidelity factor of the translation reaction, by catalyzing a one-codon backward translocation of tRNAs on improperly translocated ribosomes. Back-translocation proceeds from a post-translocation (POST) complex to a pre-translocation (PRE) complex, thus giving elongation factor G a second chance to translocate the tRNAs correctly. Binds to ribosomes in a GTP-dependent manner. This chain is Elongation factor 4, found in Methylocella silvestris (strain DSM 15510 / CIP 108128 / LMG 27833 / NCIMB 13906 / BL2).